The sequence spans 151 residues: Small ribosomal subunit protein uS9 (151 aa).

The protein belongs to the universal ribosomal protein uS9 family.

The polypeptide is Small ribosomal subunit protein uS9 (RpS16) (Spodoptera frugiperda (Fall armyworm)).